The primary structure comprises 237 residues: Phosphoribosylaminoimidazole-succinocarboxamide synthase (237 aa).

It belongs to the SAICAR synthetase family.

The catalysed reaction is 5-amino-1-(5-phospho-D-ribosyl)imidazole-4-carboxylate + L-aspartate + ATP = (2S)-2-[5-amino-1-(5-phospho-beta-D-ribosyl)imidazole-4-carboxamido]succinate + ADP + phosphate + 2 H(+). It participates in purine metabolism; IMP biosynthesis via de novo pathway; 5-amino-1-(5-phospho-D-ribosyl)imidazole-4-carboxamide from 5-amino-1-(5-phospho-D-ribosyl)imidazole-4-carboxylate: step 1/2. This Hamiltonella defensa subsp. Acyrthosiphon pisum (strain 5AT) protein is Phosphoribosylaminoimidazole-succinocarboxamide synthase.